We begin with the raw amino-acid sequence, 514 residues long: ATP synthase subunit alpha (514 aa).

Residue Gly170–Thr177 participates in ATP binding.

This sequence belongs to the ATPase alpha/beta chains family. In terms of assembly, F-type ATPases have 2 components, CF(1) - the catalytic core - and CF(0) - the membrane proton channel. CF(1) has five subunits: alpha(3), beta(3), gamma(1), delta(1), epsilon(1). CF(0) has three main subunits: a(1), b(2) and c(9-12). The alpha and beta chains form an alternating ring which encloses part of the gamma chain. CF(1) is attached to CF(0) by a central stalk formed by the gamma and epsilon chains, while a peripheral stalk is formed by the delta and b chains.

It localises to the cell inner membrane. It carries out the reaction ATP + H2O + 4 H(+)(in) = ADP + phosphate + 5 H(+)(out). Produces ATP from ADP in the presence of a proton gradient across the membrane. The alpha chain is a regulatory subunit. The chain is ATP synthase subunit alpha from Pseudomonas savastanoi pv. phaseolicola (strain 1448A / Race 6) (Pseudomonas syringae pv. phaseolicola (strain 1448A / Race 6)).